The primary structure comprises 203 residues: CCG-binding protein 1 (203 aa).

The interval 156–178 (IPDGLPKSEQELEEEEKSKMPDS) is disordered. A compositionally biased stretch (basic and acidic residues) spans 161 to 175 (PKSEQELEEEEKSKM).

Homotetramer. Interacts with MEE12/CCG, MED7A, MED7B, MED9, AGL49, AGL53, AGL75, AGL80, AGL81, AGL82, AGL103 and NRPB1 (via CTD). In terms of tissue distribution, expressed in roots, leaves, stems and flowers. Expressed in the central cell of mature ovules.

It is found in the nucleus. The protein resides in the cytoplasm. Required for the development of the one-cell zygote and endosperm in embryos. Required for micropylar pollen tube guidance, but has no effect on ovule development and gametophytic cell fate specification. May connect transcription factors and the Pol II machinery to regulate pollen tube attraction, via its interactions with AGAMOUS-like (AGL) transcription factors, MEE14/CCG and the Mediator complex. This chain is CCG-binding protein 1, found in Arabidopsis thaliana (Mouse-ear cress).